The primary structure comprises 201 residues: Large ribosomal subunit protein uL4 (201 aa).

Residues 44 to 71 (RAQKTRAEVTGSGKKPWRQKGTGRARSG) are disordered.

The protein belongs to the universal ribosomal protein uL4 family. As to quaternary structure, part of the 50S ribosomal subunit.

Its function is as follows. One of the primary rRNA binding proteins, this protein initially binds near the 5'-end of the 23S rRNA. It is important during the early stages of 50S assembly. It makes multiple contacts with different domains of the 23S rRNA in the assembled 50S subunit and ribosome. Forms part of the polypeptide exit tunnel. This Enterobacter sp. (strain 638) protein is Large ribosomal subunit protein uL4.